The following is a 105-amino-acid chain: ESAT-6-like protein EsxU (105 aa).

It belongs to the WXG100 family. CFP-10 subfamily. Forms a tight 1:1 complex with EsxT. Complex formation results in induction of alpha-helical conformation and stability against chemical denaturation.

It is found in the secreted. This is ESAT-6-like protein EsxU from Mycobacterium tuberculosis (strain ATCC 25618 / H37Rv).